A 391-amino-acid chain; its full sequence is Phosphoglycerate kinase (391 aa).

Residues 21-23 (DLN), Arg36, 59-62 (HLGR), Arg113, and Arg146 contribute to the substrate site. ATP is bound by residues Lys197, Glu319, and 345–348 (GGDT).

Belongs to the phosphoglycerate kinase family. Monomer.

It localises to the cytoplasm. The catalysed reaction is (2R)-3-phosphoglycerate + ATP = (2R)-3-phospho-glyceroyl phosphate + ADP. It participates in carbohydrate degradation; glycolysis; pyruvate from D-glyceraldehyde 3-phosphate: step 2/5. In Xanthomonas axonopodis pv. citri (strain 306), this protein is Phosphoglycerate kinase.